A 421-amino-acid chain; its full sequence is UDP-N-acetylglucosamine 1-carboxyvinyltransferase (421 aa).

Position 22 to 23 (22 to 23 (KN)) interacts with phosphoenolpyruvate. Arginine 94 serves as a coordination point for UDP-N-acetyl-alpha-D-glucosamine. Cysteine 118 functions as the Proton donor in the catalytic mechanism. At cysteine 118 the chain carries 2-(S-cysteinyl)pyruvic acid O-phosphothioketal. Residues 123 to 127 (RPMDL), aspartate 308, and isoleucine 330 each bind UDP-N-acetyl-alpha-D-glucosamine.

This sequence belongs to the EPSP synthase family. MurA subfamily.

The protein resides in the cytoplasm. It catalyses the reaction phosphoenolpyruvate + UDP-N-acetyl-alpha-D-glucosamine = UDP-N-acetyl-3-O-(1-carboxyvinyl)-alpha-D-glucosamine + phosphate. Its pathway is cell wall biogenesis; peptidoglycan biosynthesis. Functionally, cell wall formation. Adds enolpyruvyl to UDP-N-acetylglucosamine. The sequence is that of UDP-N-acetylglucosamine 1-carboxyvinyltransferase from Ruegeria pomeroyi (strain ATCC 700808 / DSM 15171 / DSS-3) (Silicibacter pomeroyi).